Consider the following 149-residue polypeptide: Transcriptional regulator MraZ (149 aa).

2 consecutive SpoVT-AbrB domains span residues 5–52 and 81–124; these read ITTL…PLPE and AEEC…DSMV.

Belongs to the MraZ family. As to quaternary structure, forms oligomers.

It is found in the cytoplasm. The protein resides in the nucleoid. In Nitrosococcus oceani (strain ATCC 19707 / BCRC 17464 / JCM 30415 / NCIMB 11848 / C-107), this protein is Transcriptional regulator MraZ.